Consider the following 182-residue polypeptide: MISLALAAETAEHGGEAASHGGLFADPAFWVSIAFLMVVGFVYIKAKNKILGALDGRGAAVKAKLDEARKLRDDAQALLAEYQRRQRDAMKEADEIIRHAKDEAARLRAKAEADLEASIRRREQQAVDRIAQAEAQALAQVRNEAVDVAVSAARSLMAGSLAKADQNRLIDAAIADLPGKLH.

Residues 24–44 traverse the membrane as a helical segment; the sequence is FADPAFWVSIAFLMVVGFVYI.

Belongs to the ATPase B chain family. F-type ATPases have 2 components, F(1) - the catalytic core - and F(0) - the membrane proton channel. F(1) has five subunits: alpha(3), beta(3), gamma(1), delta(1), epsilon(1). F(0) has three main subunits: a(1), b(2) and c(10-14). The alpha and beta chains form an alternating ring which encloses part of the gamma chain. F(1) is attached to F(0) by a central stalk formed by the gamma and epsilon chains, while a peripheral stalk is formed by the delta and b chains.

The protein localises to the cell inner membrane. F(1)F(0) ATP synthase produces ATP from ADP in the presence of a proton or sodium gradient. F-type ATPases consist of two structural domains, F(1) containing the extramembraneous catalytic core and F(0) containing the membrane proton channel, linked together by a central stalk and a peripheral stalk. During catalysis, ATP synthesis in the catalytic domain of F(1) is coupled via a rotary mechanism of the central stalk subunits to proton translocation. Functionally, component of the F(0) channel, it forms part of the peripheral stalk, linking F(1) to F(0). The chain is ATP synthase subunit b 1 from Rhodospirillum rubrum (strain ATCC 11170 / ATH 1.1.1 / DSM 467 / LMG 4362 / NCIMB 8255 / S1).